We begin with the raw amino-acid sequence, 671 residues long: DEAD-box ATP-dependent RNA helicase 7 (671 aa).

The segment at 1-84 (MPSLMLSDKK…EKKKSSKKVK (84 aa)) is disordered. Positions 26-41 (LDSKKGKKEQKLKLSD) are enriched in basic and acidic residues. Serine 40 and serine 42 each carry phosphoserine. Residues 50 to 60 (KKSKKKDKKRK) are compositionally biased toward basic residues. The Q motif motif lies at 96 to 124 (NAVSKFRISAPLREKLKANGIEALFPIQA). A Helicase ATP-binding domain is found at 127–309 (FDMVLDGADL…NRFLKRDQKT (183 aa)). ATP is bound at residue 140-147 (ARTGQGKT). The DEAD box motif lies at 255 to 258 (DEAD). One can recognise a Helicase C-terminal domain in the interval 339–479 (LIPDIISCYS…HLAAPQPDEI (141 aa)). Residues 627–671 (EREPLPQKRFGGGGRGNRFGGGGGNRFGGGGGRGRGGSGGRGQRY) form a disordered region. Gly residues predominate over residues 636-671 (FGGGGRGNRFGGGGGNRFGGGGGRGRGGSGGRGQRY).

Belongs to the DEAD box helicase family. DDX21/DDX50 subfamily.

The protein resides in the nucleus. The catalysed reaction is ATP + H2O = ADP + phosphate + H(+). This chain is DEAD-box ATP-dependent RNA helicase 7 (RH7), found in Arabidopsis thaliana (Mouse-ear cress).